A 225-amino-acid chain; its full sequence is Probable GTP-binding protein EngB (225 aa).

The EngB-type G domain occupies 31–204 (VGVEIAFAGR…LGILDSWCKP (174 aa)). Residues 39-46 (GRSNAGKS), 65-69 (GRTQL), 83-86 (DLPG), 150-153 (TKAD), and 183-185 (FSS) contribute to the GTP site. Mg(2+)-binding residues include serine 46 and threonine 67.

This sequence belongs to the TRAFAC class TrmE-Era-EngA-EngB-Septin-like GTPase superfamily. EngB GTPase family. Mg(2+) serves as cofactor.

Necessary for normal cell division and for the maintenance of normal septation. The sequence is that of Probable GTP-binding protein EngB from Shewanella pealeana (strain ATCC 700345 / ANG-SQ1).